The chain runs to 164 residues: CDP-archaeol synthase (164 aa).

Transmembrane regions (helical) follow at residues 3 to 23 (LLYFFLLIWPPYVANGSAVLA), 51 to 71 (YEGFLIGLSTGTFIGYAPNLL), 77 to 97 (LLDAFVLSIAALLGDLFGAFI), and 122 to 142 (LAVYTLYKDISVEYIIAAVII).

Belongs to the CDP-archaeol synthase family. Requires Mg(2+) as cofactor.

It is found in the cell membrane. The enzyme catalyses 2,3-bis-O-(geranylgeranyl)-sn-glycerol 1-phosphate + CTP + H(+) = CDP-2,3-bis-O-(geranylgeranyl)-sn-glycerol + diphosphate. It participates in membrane lipid metabolism; glycerophospholipid metabolism. Functionally, catalyzes the formation of CDP-2,3-bis-(O-geranylgeranyl)-sn-glycerol (CDP-archaeol) from 2,3-bis-(O-geranylgeranyl)-sn-glycerol 1-phosphate (DGGGP) and CTP. This reaction is the third ether-bond-formation step in the biosynthesis of archaeal membrane lipids. The chain is CDP-archaeol synthase from Pyrobaculum islandicum (strain DSM 4184 / JCM 9189 / GEO3).